The following is a 137-amino-acid chain: NADH dehydrogenase [ubiquinone] 1 beta subcomplex subunit 7 (137 aa).

Gly2 carries the N-myristoyl glycine lipid modification. A CHCH domain is found at 56 to 98 (RDYCAHHLIRLLKCKRDSFPNFLACKQERHDWDYCEHRDYVMR). Residues 59–69 (CAHHLIRLLKC) carry the Cx9C motif 1 motif. Disulfide bonds link Cys59–Cys90 and Cys69–Cys80. Ser73 bears the Phosphoserine mark. A Cx9C motif 2 motif is present at residues 80-90 (CKQERHDWDYC). The disordered stretch occupies residues 113–137 (KRREKKAAELAKGQGPGEVDPKVAL).

This sequence belongs to the complex I NDUFB7 subunit family. In terms of assembly, complex I is composed of 45 different subunits.

Its subcellular location is the mitochondrion inner membrane. It is found in the mitochondrion intermembrane space. Its function is as follows. Accessory subunit of the mitochondrial membrane respiratory chain NADH dehydrogenase (Complex I), that is believed not to be involved in catalysis. Complex I functions in the transfer of electrons from NADH to the respiratory chain. The immediate electron acceptor for the enzyme is believed to be ubiquinone. The chain is NADH dehydrogenase [ubiquinone] 1 beta subcomplex subunit 7 (NDUFB7) from Homo sapiens (Human).